The chain runs to 832 residues: FAST kinase domain-containing protein 1, mitochondrial (832 aa).

The 61-residue stretch at 765–825 folds into the RAP domain; sequence VAIEFLDSKA…KDAWIDYLRK (61 aa).

The protein belongs to the FAST kinase family.

Its subcellular location is the mitochondrion. Its function is as follows. May regulate the stability of some mitochondrial mRNA species. In Xenopus tropicalis (Western clawed frog), this protein is FAST kinase domain-containing protein 1, mitochondrial (fastkd1).